The sequence spans 188 residues: Protein YecM (188 aa).

The protein to H.influenzae HI_1582/HI_1581.

The chain is Protein YecM (yecM) from Escherichia coli (strain K12).